The following is a 136-amino-acid chain: ATP synthase epsilon chain (136 aa).

Belongs to the ATPase epsilon chain family. In terms of assembly, F-type ATPases have 2 components, CF(1) - the catalytic core - and CF(0) - the membrane proton channel. CF(1) has five subunits: alpha(3), beta(3), gamma(1), delta(1), epsilon(1). CF(0) has three main subunits: a, b and c.

It is found in the cell inner membrane. Functionally, produces ATP from ADP in the presence of a proton gradient across the membrane. This is ATP synthase epsilon chain from Persephonella marina (strain DSM 14350 / EX-H1).